The following is a 429-amino-acid chain: Serine--tRNA ligase (429 aa).

235–237 contacts L-serine; that stretch reads TAE. ATP is bound at residue 266 to 268; it reads RSE. Glutamate 289 lines the L-serine pocket. 353 to 356 lines the ATP pocket; sequence EISS. Position 389 (serine 389) interacts with L-serine.

Belongs to the class-II aminoacyl-tRNA synthetase family. Type-1 seryl-tRNA synthetase subfamily. Homodimer. The tRNA molecule binds across the dimer.

The protein localises to the cytoplasm. The enzyme catalyses tRNA(Ser) + L-serine + ATP = L-seryl-tRNA(Ser) + AMP + diphosphate + H(+). The catalysed reaction is tRNA(Sec) + L-serine + ATP = L-seryl-tRNA(Sec) + AMP + diphosphate + H(+). Its pathway is aminoacyl-tRNA biosynthesis; selenocysteinyl-tRNA(Sec) biosynthesis; L-seryl-tRNA(Sec) from L-serine and tRNA(Sec): step 1/1. Functionally, catalyzes the attachment of serine to tRNA(Ser). Is also able to aminoacylate tRNA(Sec) with serine, to form the misacylated tRNA L-seryl-tRNA(Sec), which will be further converted into selenocysteinyl-tRNA(Sec). The sequence is that of Serine--tRNA ligase from Haemophilus influenzae (strain PittGG).